The following is a 67-amino-acid chain: Large ribosomal subunit protein uL29 (67 aa).

The protein belongs to the universal ribosomal protein uL29 family.

This chain is Large ribosomal subunit protein uL29, found in Ehrlichia ruminantium (strain Gardel).